The sequence spans 377 residues: Carboxynorspermidine/carboxyspermidine decarboxylase (377 aa).

Lysine 41 carries the post-translational modification N6-(pyridoxal phosphate)lysine. Substrate contacts are provided by glutamate 238 and aspartate 274.

It belongs to the Orn/Lys/Arg decarboxylase class-II family. NspC subfamily. As to quaternary structure, homodimer. Pyridoxal 5'-phosphate is required as a cofactor.

The protein localises to the cytoplasm. It catalyses the reaction carboxynorspermidine + H(+) = norspermidine + CO2. The catalysed reaction is carboxyspermidine + H(+) = spermidine + CO2. With respect to regulation, dithiothreitol greatly stimulates activity, maximum stimulation being at 5-20 mM dithiothreitol concentration. Fe(3+), Fe(2+) and Mn(2+) severely inhibit activity (88%, 82% and 50%, respectively), whereas Zn(2+) has a slightly inhibitory effect (23%) and Mg(2+), Ca(2+), Cu(2+) and Cu(+) have no effect. Functionally, catalyzes the decarboxylation of carboxynorspermidine and carboxyspermidine. 2,3-diaminopropionic acid, 2,4-diaminobutyric acid, L-ornithine or L-lysine cannot serve as substrates. This Vibrio alginolyticus protein is Carboxynorspermidine/carboxyspermidine decarboxylase.